The chain runs to 261 residues: MIFWLRSVIVTFGRPAEWPRCLRHLCSRGAAMDLGPMRKTYRGDPEAFEETHLTSLDPVKQFAAWFEEAVQCPDIMEANAMCLATCTRDGKPSARMVLLKGFGKDGFRFFTNFESRKGKELDSNPFASLVFYWEPLHRQVRVEGPVKKLPEEEAECYFHSRPKSSQIGAVVSHQSSVIPDREYLRKKNKELEQLYQEQEVPKPKYWGGYILYPQVMEFWQGQTNRLHDRIVFRRGLLTGDSPLGPMTHRGEEDWVYERLAP.

Residue 42–45 (RGDP) participates in pyridoxal 5'-phosphate binding. Position 95 to 98 (95 to 98 (RMVL)) interacts with FMN. Lys-100 serves as a coordination point for pyridoxal 5'-phosphate. FMN is bound by residues 110 to 111 (FT), 116 to 117 (RK), and Gln-139. Pyridoxal 5'-phosphate-binding residues include Tyr-157, Arg-161, and Ser-165. FMN-binding positions include 174 to 175 (QS) and Trp-219. Pyridoxal 5'-phosphate is bound at residue 225–227 (RLH). Arg-229 contributes to the FMN binding site. At Thr-238 the chain carries Phosphothreonine. Phosphoserine is present on Ser-241.

It belongs to the pyridoxamine 5'-phosphate oxidase family. Homodimer. Requires FMN as cofactor.

It carries out the reaction pyridoxamine 5'-phosphate + O2 + H2O = pyridoxal 5'-phosphate + H2O2 + NH4(+). It catalyses the reaction pyridoxine 5'-phosphate + O2 = pyridoxal 5'-phosphate + H2O2. It functions in the pathway cofactor metabolism; pyridoxal 5'-phosphate salvage; pyridoxal 5'-phosphate from pyridoxamine 5'-phosphate: step 1/1. It participates in cofactor metabolism; pyridoxal 5'-phosphate salvage; pyridoxal 5'-phosphate from pyridoxine 5'-phosphate: step 1/1. Functionally, catalyzes the oxidation of either pyridoxine 5'-phosphate (PNP) or pyridoxamine 5'-phosphate (PMP) into pyridoxal 5'-phosphate (PLP). This chain is Pyridoxine-5'-phosphate oxidase (PNPO), found in Bos taurus (Bovine).